Reading from the N-terminus, the 347-residue chain is Selenide, water dikinase (347 aa).

The active site involves Cys17. ATP is bound by residues Lys20 and 48 to 50 (TRD). Asp51 lines the Mg(2+) pocket. ATP-binding positions include Asp68, Asp91, and 139 to 141 (GHS). A Mg(2+)-binding site is contributed by Asp91. Asp227 lines the Mg(2+) pocket.

This sequence belongs to the selenophosphate synthase 1 family. Class I subfamily. As to quaternary structure, homodimer. It depends on Mg(2+) as a cofactor.

It carries out the reaction hydrogenselenide + ATP + H2O = selenophosphate + AMP + phosphate + 2 H(+). Its function is as follows. Synthesizes selenophosphate from selenide and ATP. In Salmonella typhi, this protein is Selenide, water dikinase.